Reading from the N-terminus, the 331-residue chain is DNA-directed RNA polymerase subunit alpha (331 aa).

Positions 1–246 (MMQTSRTLHN…GLFSPLQEVS (246 aa)) are alpha N-terminal domain (alpha-NTD). Residues 256–331 (AEDNQKNQIP…LTLPRERSKT (76 aa)) are alpha C-terminal domain (alpha-CTD).

Belongs to the RNA polymerase alpha chain family. As to quaternary structure, in cyanobacteria the RNAP catalytic core is composed of 2 alpha, 1 beta, 1 beta', 1 gamma and 1 omega subunit. When a sigma factor is associated with the core the holoenzyme is formed, which can initiate transcription.

The enzyme catalyses RNA(n) + a ribonucleoside 5'-triphosphate = RNA(n+1) + diphosphate. In terms of biological role, DNA-dependent RNA polymerase catalyzes the transcription of DNA into RNA using the four ribonucleoside triphosphates as substrates. The polypeptide is DNA-directed RNA polymerase subunit alpha (Synechococcus sp. (strain JA-3-3Ab) (Cyanobacteria bacterium Yellowstone A-Prime)).